Here is a 1227-residue protein sequence, read N- to C-terminus: Pentatricopeptide repeat-containing protein At5g15280, mitochondrial (1227 aa).

Residues 1-31 (MLNLLSISSSSRLRFLNKVSSLTYHYSFAFF) constitute a mitochondrion transit peptide. PPR repeat units follow at residues 146-180 (LPQA…GDTM), 182-216 (NEGI…GLVP), 217-251 (LTSC…RAEL), 255-289 (NIDS…GCIL), 290-320 (NSSI…VKYE), 322-356 (DVFV…GFKQ), 357-391 (DEVT…GYKP), 392-426 (DVYS…GMML), 427-461 (SLST…GLIE), 527-561 (VLPE…GQKL), 562-597 (SRRS…AYQL), 598-632 (DGET…HHPI), 633-667 (DNVT…NWLP), 668-698 (DLND…VFIS), 703-737 (QSEA…GCIV), 738-772 (EQEV…KHIP), 773-800 (SLGS…AEQI), 802-836 (SSYV…GLSS), 837-871 (YNKI…NIIC), 872-906 (SVKS…ESNP), 908-942 (GVII…GVLP), 943-977 (DETT…GMKP), 978-1012 (NNRS…GWNL), 1014-1044 (SSVV…VTRN), 1047-1081 (MAPN…QSIP), 1082-1116 (GSSS…GLSP), 1117-1151 (SIST…GESP), and 1152-1186 (SQEM…GYEV).

The protein belongs to the PPR family. P subfamily.

It localises to the mitochondrion. The polypeptide is Pentatricopeptide repeat-containing protein At5g15280, mitochondrial (Arabidopsis thaliana (Mouse-ear cress)).